The primary structure comprises 735 residues: Photosystem I P700 chlorophyll a apoprotein A2 (735 aa).

8 helical membrane passes run 47 to 70 (IFAS…FHVA), 136 to 159 (LFTG…LHLQ), 176 to 200 (LNHH…HVAI), 274 to 292 (MAHH…GHMY), 331 to 354 (LHFQ…QHIY), 370 to 396 (AALY…IFFI), 418 to 440 (AIIS…LYVH), and 518 to 536 (FLVH…LILV). Positions 560 and 569 each coordinate [4Fe-4S] cluster. The next 2 membrane-spanning stretches (helical) occupy residues 576 to 597 (AFYL…YFHW) and 644 to 666 (LSVW…MFLI). Histidine 655, methionine 663, and tyrosine 671 together coordinate chlorophyll a. Tryptophan 672 provides a ligand contact to phylloquinone. Residues 708 to 728 (LVGLVHFSVGYIFTYAAFLIA) traverse the membrane as a helical segment.

The protein belongs to the PsaA/PsaB family. The PsaA/B heterodimer binds the P700 chlorophyll special pair and subsequent electron acceptors. PSI consists of a core antenna complex that captures photons, and an electron transfer chain that converts photonic excitation into a charge separation. The eukaryotic PSI reaction center is composed of at least 11 subunits. P700 is a chlorophyll a/chlorophyll a' dimer, A0 is one or more chlorophyll a, A1 is one or both phylloquinones and FX is a shared 4Fe-4S iron-sulfur center. serves as cofactor.

The protein resides in the plastid. It is found in the chloroplast thylakoid membrane. It catalyses the reaction reduced [plastocyanin] + hnu + oxidized [2Fe-2S]-[ferredoxin] = oxidized [plastocyanin] + reduced [2Fe-2S]-[ferredoxin]. In terms of biological role, psaA and PsaB bind P700, the primary electron donor of photosystem I (PSI), as well as the electron acceptors A0, A1 and FX. PSI is a plastocyanin/cytochrome c6-ferredoxin oxidoreductase, converting photonic excitation into a charge separation, which transfers an electron from the donor P700 chlorophyll pair to the spectroscopically characterized acceptors A0, A1, FX, FA and FB in turn. Oxidized P700 is reduced on the lumenal side of the thylakoid membrane by plastocyanin or cytochrome c6. This Chlamydomonas moewusii (Chlamydomonas eugametos) protein is Photosystem I P700 chlorophyll a apoprotein A2.